The primary structure comprises 417 residues: DNA-directed RNA polymerase subunit beta (417 aa).

This sequence belongs to the RNA polymerase beta chain family. In plastids the minimal PEP RNA polymerase catalytic core is composed of four subunits: alpha, beta, beta', and beta''. When a (nuclear-encoded) sigma factor is associated with the core the holoenzyme is formed, which can initiate transcription.

It localises to the plastid. The protein resides in the chloroplast. The catalysed reaction is RNA(n) + a ribonucleoside 5'-triphosphate = RNA(n+1) + diphosphate. Functionally, DNA-dependent RNA polymerase catalyzes the transcription of DNA into RNA using the four ribonucleoside triphosphates as substrates. The polypeptide is DNA-directed RNA polymerase subunit beta (rpoB) (Saponaria officinalis (Common soapwort)).